Here is a 260-residue protein sequence, read N- to C-terminus: uncharacterized protein (260 aa).

Positions 4 to 231 (LHVDHVTHTY…PKELAAMLPF (228 aa)) constitute an ABC transporter domain. Residue 40 to 47 (GPSGCGKT) participates in ATP binding.

This sequence belongs to the ABC transporter superfamily.

This is an uncharacterized protein from Bacillus subtilis (strain 168).